We begin with the raw amino-acid sequence, 1673 residues long: Protein-methionine sulfoxide oxidase mical3b (1673 aa).

The monooxygenase domain stretch occupies residues 2–492; sequence WDGQSEMCQA…RHLIDTGEGP (491 aa). FAD is bound by residues C96, 96 to 124, E115, R117, R122, N124, and D396; that span reads CGLR…SRNN. Residues 512 to 618 enclose the Calponin-homology (CH) domain; that stretch reads MARYSKLLSW…YLSQLHELLK (107 aa). The segment at 647-714 is disordered; sequence SKLGQSLSRK…PKASEGHSKV (68 aa). A compositionally biased stretch (basic and acidic residues) spans 661-671; it reads DKKEKEADSVG. Residues 791–853 enclose the LIM zinc-binding domain; it reads DVCYFCGRRV…KHHFSFRLAS (63 aa). Residues 882-892 show a composition bias toward low complexity; sequence LSSLGSVGTAT. Disordered stretches follow at residues 882–901, 918–938, 951–1100, 1159–1188, and 1357–1393; these read LSSL…SSTH, RIEL…LQEV, SLQE…KRSE, QSAR…TDGD, and GPDA…RETG. Positions 973–992 are enriched in basic and acidic residues; that stretch reads LVWKKGEELHARTNGERKLD. 2 stretches are compositionally biased toward acidic residues: residues 993-1002 and 1010-1041; these read LEEELKEEEG and EGEE…DPDI. The segment covering 1081–1094 has biased composition (low complexity); sequence SDLTPDPSTTPESS. Over residues 1159-1182 the composition is skewed to polar residues; that stretch reads QSARICDSSTQTHSVTDLQETSPL. Coiled-coil stretches lie at residues 1475 to 1531 and 1573 to 1638; these read EEEL…AVEK and QEKN…VEQR. The 167-residue stretch at 1495–1661 folds into the bMERB domain; it reads KQEELRRLHR…EKEEDSDLEA (167 aa).

This sequence belongs to the Mical family. The cofactor is FAD.

It is found in the cytoplasm. The protein localises to the cytoskeleton. The protein resides in the nucleus. The enzyme catalyses L-methionyl-[F-actin] + NADPH + O2 + H(+) = L-methionyl-(R)-S-oxide-[F-actin] + NADP(+) + H2O. Its function is as follows. Monooxygenase that promotes depolymerization of F-actin by mediating oxidation of specific methionine residues on actin. Acts by modifying actin subunits through the addition of oxygen to form methionine-sulfoxide, leading to promote actin filament severing and prevent repolymerization. Involved in exocytic vesicles tethering and fusion: the monooxygenase activity is required for this process. The sequence is that of Protein-methionine sulfoxide oxidase mical3b (mical3b) from Danio rerio (Zebrafish).